A 364-amino-acid polypeptide reads, in one-letter code: D-alanine--D-alanine ligase A (364 aa).

The 204-residue stretch at 145-348 (KRLLRDAGLN…YTDLITRLIE (204 aa)) folds into the ATP-grasp domain. Residue 175–230 (ESKLGLPLFVKPANQGSSVGVSKVTSEEQYAIAVDLAFEFDHKVIVEQGIKGREIE) participates in ATP binding. The Mg(2+) site is built by Asp302, Glu315, and Asn317.

The protein belongs to the D-alanine--D-alanine ligase family. Mg(2+) is required as a cofactor. Requires Mn(2+) as cofactor.

The protein resides in the cytoplasm. It carries out the reaction 2 D-alanine + ATP = D-alanyl-D-alanine + ADP + phosphate + H(+). Its pathway is cell wall biogenesis; peptidoglycan biosynthesis. In terms of biological role, cell wall formation. The protein is D-alanine--D-alanine ligase A (ddlA) of Escherichia coli O157:H7.